The following is a 486-amino-acid chain: MITTEIKRVKNHINGEWVESTGTEVEAVPNPATGKIIAYVPLSPKEDVEKAVEAAKAAFETWSKVPVPNRSRNLYKYLQLLQENKDELAKIITLENGKTLTDATGEVQRGIEAVELATSTPNLMMGQALPNIASGIDGSIWRYPIGVVAGITPFNFPMMIPLWMFPLAIACGNTFVLKTSERTPLLAERLVELFYEAGFPKGVLNLVQGGKDVVNSILENKDIQAVSFVGSEPVARYVYETGTKHGKRVQALAGAKNHAIVMPDCNLEKTVQGVIGSAFASSGERCMACSVVAVVDEIADEFIDVLVAETKKLKVGDGFNEDNYVGPLIRESHKERVLGYINSGVADGATLLVDGRKINEEVGEGYFVGATIFDGVNQEMKIWQDEIFAPVLSIVRVKDLEEGIKLTNQSKFANGAVIYTSNGKHAQTFRDNIDAGMIGVNVNVPAPMAFFAFAGNKASFFGDLSTNGTDGVQFYTRKKVVTERWF.

Positions 154, 178, 181, 182, and 231 each coordinate NAD(+). Catalysis depends on cysteine 286, which acts as the Nucleophile. Position 386 (glutamate 386) interacts with NAD(+).

It belongs to the aldehyde dehydrogenase family. IolA subfamily. Homotetramer.

It catalyses the reaction 3-oxopropanoate + NAD(+) + CoA + H2O = hydrogencarbonate + acetyl-CoA + NADH + H(+). The enzyme catalyses 2-methyl-3-oxopropanoate + NAD(+) + CoA + H2O = propanoyl-CoA + hydrogencarbonate + NADH + H(+). It functions in the pathway polyol metabolism; myo-inositol degradation into acetyl-CoA; acetyl-CoA from myo-inositol: step 7/7. Functionally, catalyzes the oxidation of malonate semialdehyde (MSA) and methylmalonate semialdehyde (MMSA) into acetyl-CoA and propanoyl-CoA, respectively. Is involved in a myo-inositol catabolic pathway. Bicarbonate, and not CO2, is the end-product of the enzymatic reaction. This is Malonate-semialdehyde dehydrogenase from Bacillus cereus (strain ATCC 14579 / DSM 31 / CCUG 7414 / JCM 2152 / NBRC 15305 / NCIMB 9373 / NCTC 2599 / NRRL B-3711).